An 806-amino-acid polypeptide reads, in one-letter code: DEP domain-containing protein 1A (806 aa).

The 85-residue stretch at 24 to 108 (FRAAMPLRKH…DNNSLYRFPS (85 aa)) folds into the DEP domain. The tract at residues 142-177 (QFSKKTPKRRASVDSKEEQENEDLMEDQRNDDDFPK) is disordered. Over residues 167-177 (EDQRNDDDFPK) the composition is skewed to basic and acidic residues. The Rho-GAP domain maps to 279-319 (DYFLNLPEPLLTFEFYELFVNILVVCGYITVPNSHNGKHRF). The tract at residues 564 to 588 (SHSSFPSTSSLLPPTTSPNSTGSES) is disordered.

The polypeptide is DEP domain-containing protein 1A (depdc1a) (Xenopus laevis (African clawed frog)).